The sequence spans 937 residues: uncharacterized protein (937 aa).

T2 bears the N-acetylthreonine mark. Residues 281-937 are disordered; the sequence is NESPSSNINT…KKGKGKGGRK (657 aa). Positions 290–308 are enriched in low complexity; that stretch reads TTTTSTTTTTTTTTSSPVV. T292 (charge relay system) is an active-site residue. Composition is skewed to basic and acidic residues over residues 309-402, 411-431, 469-489, 512-532, 600-615, 667-687, 738-758, and 780-872; these read EESK…EKQQ, AEKERLEKEEADKLEKERLEA, AEKERLEKEEADRLEKEKLEA, AEKERLEKEETERLEKEKLEA, AEKEEAERLEKEKLEA, AEKERLEKEEAERLEKEKLEA, AEKERLEKEETERLEKERLEA, and AEKE…KVEE. A coiled-coil region spans residues 345–802; it reads VDDSKEKEEK…KAAEETKVEE (458 aa). Positions 887–897 are enriched in acidic residues; it reads EETEEGEEVDE. Over residues 898 to 924 the composition is skewed to low complexity; it reads ASNTTTEQTTTNANQPKKPNNNNNNNK. The span at 925 to 937 shows a compositional bias: basic residues; it reads GKGKKGKGKGGRK.

The protein belongs to the AB hydrolase superfamily.

This is an uncharacterized protein from Dictyostelium discoideum (Social amoeba).